The primary structure comprises 317 residues: Retinol dehydrogenase 7 (317 aa).

Residue 33-57 (FITGCDSGFGNLLARQLDRRGMRVL) coordinates NADP(+). Ser164 is a substrate binding site. Residue Tyr176 is the Proton acceptor of the active site.

It belongs to the short-chain dehydrogenases/reductases (SDR) family.

It is found in the microsome. The protein resides in the endoplasmic reticulum. The catalysed reaction is all-trans-retinol--[retinol-binding protein] + NAD(+) = all-trans-retinal--[retinol-binding protein] + NADH + H(+). It functions in the pathway cofactor metabolism; retinol metabolism. Its function is as follows. Acts on retinol bound on cellular retinol-binding protein (CRBP). The chain is Retinol dehydrogenase 7 from Rattus norvegicus (Rat).